Consider the following 346-residue polypeptide: 4-hydroxy-2-oxovalerate aldolase (346 aa).

Positions 8-260 constitute a Pyruvate carboxyltransferase domain; that stretch reads VTLHDMSLRD…ETGIDLYKIM (253 aa). 16–17 contacts substrate; sequence RD. Aspartate 17 serves as a coordination point for Mn(2+). Histidine 20 serves as the catalytic Proton acceptor. Positions 170 and 199 each coordinate substrate. 2 residues coordinate Mn(2+): histidine 199 and histidine 201. A substrate-binding site is contributed by tyrosine 290.

This sequence belongs to the 4-hydroxy-2-oxovalerate aldolase family.

The catalysed reaction is (S)-4-hydroxy-2-oxopentanoate = acetaldehyde + pyruvate. The chain is 4-hydroxy-2-oxovalerate aldolase (nahM) from Stutzerimonas stutzeri (Pseudomonas stutzeri).